A 138-amino-acid chain; its full sequence is uncharacterized protein (138 aa).

This is an uncharacterized protein from Acanthamoeba polyphaga mimivirus (APMV).